A 317-amino-acid polypeptide reads, in one-letter code: Methionyl-tRNA formyltransferase (317 aa).

109 to 112 (SLLP) serves as a coordination point for (6S)-5,6,7,8-tetrahydrofolate.

It belongs to the Fmt family.

It carries out the reaction L-methionyl-tRNA(fMet) + (6R)-10-formyltetrahydrofolate = N-formyl-L-methionyl-tRNA(fMet) + (6S)-5,6,7,8-tetrahydrofolate + H(+). Functionally, attaches a formyl group to the free amino group of methionyl-tRNA(fMet). The formyl group appears to play a dual role in the initiator identity of N-formylmethionyl-tRNA by promoting its recognition by IF2 and preventing the misappropriation of this tRNA by the elongation apparatus. This chain is Methionyl-tRNA formyltransferase, found in Desulforamulus reducens (strain ATCC BAA-1160 / DSM 100696 / MI-1) (Desulfotomaculum reducens).